We begin with the raw amino-acid sequence, 227 residues long: 4'-phosphopantetheinyl transferase PptT (227 aa).

CoA contacts are provided by residues Arg-48, Arg-56, 75–78, 92–93, and Asp-114; these read KGDK and TH. The Mg(2+) site is built by Asp-114, Ala-115, and Glu-116. Residues Glu-157, Lys-161, and Leu-171 each contribute to the CoA site.

The protein belongs to the P-Pant transferase superfamily. Requires Mg(2+) as cofactor.

The catalysed reaction is apo-[ACP] + CoA = holo-[ACP] + adenosine 3',5'-bisphosphate + H(+). Its activity is regulated as follows. Inhibited by the amidino-urea compound 1-[(2,6-diethylphenyl)-3-N-ethylcarbamimodoyl]urea (compound 8918). It acts by binding to the phosphopantetheine pocket in the active site. Inhibition by compound 8918 kills M.tuberculosis. Functionally, transfers the 4'-phosphopantetheine moiety from coenzyme A to a Ser of acyl-carrier-protein. Involved in post-translational modification of various type-I polyketide synthases required for the formation of both mycolic acids and lipid virulence factors. Acts on Pks13, Mas, PpsA, PpsB, PpsC and PpsD. Also acts on AcpM, the meromycolate extension acyl carrier protein. In addition, is involved in the activation of the acyl carrier protein MbtL and the nonribosomal peptides synthases MbtB and MbtE, which are involved in the biosynthesis of the siderophore mycobactin. Its function is as follows. Required for the replication and survival of Mycobacterium during the acute and chronic phases of infection in mice. The chain is 4'-phosphopantetheinyl transferase PptT from Mycobacterium tuberculosis (strain ATCC 25618 / H37Rv).